A 174-amino-acid chain; its full sequence is MASTTFSSAFSILSLPSSSPSPPPSPPRTLPVANRRRRAAAVASTATESPKVLELGDAIAGLTLEEARNLVDHLQERLCVSAASFPPAAAGLRAAAVEEAPVEQTEFDVVIEEVPSSARIATIKIVRALTNLALKEAKDLIEGLPKKLKEAVSKDEAEEAKKQLEGVGAKVSIA.

The transit peptide at 1 to 45 (MASTTFSSAFSILSLPSSSPSPPPSPPRTLPVANRRRRAAAVAST) directs the protein to the chloroplast. The tract at residues 1 to 46 (MASTTFSSAFSILSLPSSSPSPPPSPPRTLPVANRRRRAAAVASTA) is disordered. A compositionally biased stretch (low complexity) spans 7–18 (SSAFSILSLPSS). Residues 19-29 (SPSPPPSPPRT) show a composition bias toward pro residues.

This sequence belongs to the bacterial ribosomal protein bL12 family.

It localises to the plastid. The protein localises to the chloroplast. This chain is Large ribosomal subunit protein bL12cz (RPL12-1), found in Secale cereale (Rye).